We begin with the raw amino-acid sequence, 162 residues long: Interleukin-15 (162 aa).

The first 29 residues, 1–29, serve as a signal peptide directing secretion; it reads MRISKPHLRSVSIQCYLCLLLNSHFLTEA. A propeptide spanning residues 30-48 is cleaved from the precursor; the sequence is GIHVFILGCFSAGLPKTEA. 2 disulfide bridges follow: C83–C133 and C90–C136. Residue N127 is glycosylated (N-linked (GlcNAc...) asparagine).

It belongs to the IL-15/IL-21 family.

The protein resides in the secreted. In terms of biological role, cytokine that plays a major role in the development of inflammatory and protective immune responses to microbial invaders and parasites by modulating immune cells of both the innate and adaptive immune systems. Stimulates the proliferation of natural killer cells, T-cells and B-cells and promotes the secretion of several cytokines. In monocytes, induces the production of IL8 and monocyte chemotactic protein 1/CCL2, two chemokines that attract neutrophils and monocytes respectively to sites of infection. Unlike most cytokines, which are secreted in soluble form, IL15 is expressed in association with its high affinity IL15RA on the surface of IL15-producing cells and delivers signals to target cells that express IL2RB and IL2RG receptor subunits. Binding to its receptor triggers the phosphorylation of JAK1 and JAK3 and the recruitment and subsequent phosphorylation of signal transducer and activator of transcription-3/STAT3 and STAT5. In mast cells, induces the rapid tyrosine phosphorylation of STAT6 and thereby controls mast cell survival and release of cytokines such as IL4. This chain is Interleukin-15 (IL15), found in Macaca thibetana (Pere David's macaque).